The chain runs to 58 residues: Mu-diguetoxin-Dc1b (58 aa).

Intrachain disulfides connect Cys-12-Cys-26, Cys-20-Cys-40, Cys-25-Cys-54, and Cys-42-Cys-52.

The protein belongs to the neurotoxin 26 (DTX) family. As to expression, expressed by the venom gland.

It localises to the secreted. Its function is as follows. Acts by delaying the inactivation of presynaptic voltage-sensitive sodium channels (Nav). Acts against insects and cause a progressive spastic paralysis. The sequence is that of Mu-diguetoxin-Dc1b from Diguetia canities (Desert bush spider).